We begin with the raw amino-acid sequence, 485 residues long: Glutamate--tRNA ligase (485 aa).

Arg-6 is a binding site for L-glutamate. The short motif at Pro-9–Thr-19 is the 'HIGH' region element. L-glutamate is bound by residues Tyr-192 and Arg-210 to His-214. The 'KMSKS' region motif lies at Lys-248–Arg-252. Lys-251 contacts ATP.

The protein belongs to the class-I aminoacyl-tRNA synthetase family. Glutamate--tRNA ligase type 1 subfamily. In terms of assembly, monomer. Requires Does not require zinc. as cofactor.

It is found in the cytoplasm. It catalyses the reaction tRNA(Glu) + L-glutamate + ATP = L-glutamyl-tRNA(Glu) + AMP + diphosphate. Functionally, non-discriminating glutamyl-tRNA synthetase. Catalyzes the attachment of glutamate to tRNA(Glu) in a two-step reaction: glutamate is first activated by ATP to form Glu-AMP and then transferred to the acceptor end of tRNA(Glu). Acylates both tRNA(Glu) and tRNA(Gln) with glutamate, but has 13-fold higher efficiency with tRNA(Glu). This chain is Glutamate--tRNA ligase (gltX), found in Thermosynechococcus vestitus (strain NIES-2133 / IAM M-273 / BP-1).